The following is a 257-amino-acid chain: Snake venom serine protease 2C (257 aa).

An N-terminal signal peptide occupies residues 1–18; sequence MVLIRVLANLLILQLSYA. The propeptide occupies 19–24; that stretch reads QKSSEL. A Peptidase S1 domain is found at 25–248; the sequence is VIGGHPCNIN…HLDWIKSIIA (224 aa). 6 disulfides stabilise this stretch: C31–C162, C49–C65, C97–C255, C141–C209, C173–C188, and C199–C224. Catalysis depends on charge relay system residues H64 and D109. 3 N-linked (GlcNAc...) asparagine glycosylation sites follow: N116, N120, and N121. S203 acts as the Charge relay system in catalysis.

It belongs to the peptidase S1 family. Snake venom subfamily. Monomer. Expressed by the venom gland.

Its subcellular location is the secreted. Snake venom serine protease that may act in the hemostasis system of the prey. The protein is Snake venom serine protease 2C (TLG2C) of Craspedocephalus gramineus (Bamboo pit viper).